Here is a 354-residue protein sequence, read N- to C-terminus: Uroporphyrinogen decarboxylase (354 aa).

Residues 27–31, D77, Y154, S209, and H327 contribute to the substrate site; that span reads RQAGR.

This sequence belongs to the uroporphyrinogen decarboxylase family. In terms of assembly, homodimer.

Its subcellular location is the cytoplasm. The catalysed reaction is uroporphyrinogen III + 4 H(+) = coproporphyrinogen III + 4 CO2. Its pathway is porphyrin-containing compound metabolism; protoporphyrin-IX biosynthesis; coproporphyrinogen-III from 5-aminolevulinate: step 4/4. Functionally, catalyzes the decarboxylation of four acetate groups of uroporphyrinogen-III to yield coproporphyrinogen-III. In Shewanella baltica (strain OS185), this protein is Uroporphyrinogen decarboxylase.